The primary structure comprises 200 residues: 3-isopropylmalate dehydratase small subunit (200 aa).

This sequence belongs to the LeuD family. LeuD type 1 subfamily. In terms of assembly, heterodimer of LeuC and LeuD.

It catalyses the reaction (2R,3S)-3-isopropylmalate = (2S)-2-isopropylmalate. Its pathway is amino-acid biosynthesis; L-leucine biosynthesis; L-leucine from 3-methyl-2-oxobutanoate: step 2/4. Catalyzes the isomerization between 2-isopropylmalate and 3-isopropylmalate, via the formation of 2-isopropylmaleate. The chain is 3-isopropylmalate dehydratase small subunit from Actinobacillus pleuropneumoniae serotype 3 (strain JL03).